The following is a 321-amino-acid chain: Fibronectin type III domain-containing protein 8 (321 aa).

The region spanning 175–277 (VPEVPFICEH…KPYKFATVST (103 aa)) is the Fibronectin type-III domain.

The polypeptide is Fibronectin type III domain-containing protein 8 (Fndc8) (Mus musculus (Mouse)).